The chain runs to 653 residues: Large subunit GTPase 1 homolog (653 aa).

Residues 1-31 (MGRRRAPAGGSLGRALMRHQTQRSRSHRHTD) are disordered. Residues 16–28 (LMRHQTQRSRSHR) show a composition bias toward basic residues. Phosphoserine occurs at positions 93 and 97. Residues 164-445 (WRQLWRVIER…LCDCPGLVMP (282 aa)) enclose the CP-type G domain. Position 212-215 (212-215 (NKAD)) interacts with GTP. Residues 251-358 (DSEEEANKDD…RKTPQKRQLH (108 aa)) are disordered. A Phosphoserine modification is found at Ser252. The span at 258 to 288 (KDDRQSNTAEFEHSSFDEAEISHSETEHLPA) shows a compositional bias: basic and acidic residues. Over residues 299 to 333 (TTDEDDSEYEDCPEEEEDDWQTCSEEDGPEEEDCG) the composition is skewed to acidic residues. GTP contacts are provided by residues 394–401 (GYPNVGKS) and 438–441 (DCPG). Residues 630-653 (SENGAGKPWKKHGNRNKKEKSCRL) are disordered. Positions 637-647 (PWKKHGNRNKK) are enriched in basic residues.

This sequence belongs to the TRAFAC class YlqF/YawG GTPase family. LSG1 subfamily.

It is found in the cytoplasm. It localises to the endoplasmic reticulum. The protein resides in the nucleus. The protein localises to the cajal body. It carries out the reaction GTP + H2O = GDP + phosphate + H(+). In terms of biological role, functions as a GTPase. May act by mediating the release of NMD3 from the 60S ribosomal subunit after export into the cytoplasm during the 60S ribosomal subunit maturation. This chain is Large subunit GTPase 1 homolog, found in Macaca fascicularis (Crab-eating macaque).